A 557-amino-acid chain; its full sequence is Dihydroxy-acid dehydratase (557 aa).

Cysteine 50 is a binding site for [2Fe-2S] cluster. Residue aspartate 82 participates in Mg(2+) binding. Cysteine 123 provides a ligand contact to [2Fe-2S] cluster. Positions 124 and 125 each coordinate Mg(2+). Lysine 125 carries the post-translational modification N6-carboxylysine. [2Fe-2S] cluster is bound at residue cysteine 195. Glutamate 447 serves as a coordination point for Mg(2+). Catalysis depends on serine 473, which acts as the Proton acceptor.

This sequence belongs to the IlvD/Edd family. As to quaternary structure, homodimer. [2Fe-2S] cluster is required as a cofactor. It depends on Mg(2+) as a cofactor.

It carries out the reaction (2R)-2,3-dihydroxy-3-methylbutanoate = 3-methyl-2-oxobutanoate + H2O. The enzyme catalyses (2R,3R)-2,3-dihydroxy-3-methylpentanoate = (S)-3-methyl-2-oxopentanoate + H2O. It participates in amino-acid biosynthesis; L-isoleucine biosynthesis; L-isoleucine from 2-oxobutanoate: step 3/4. Its pathway is amino-acid biosynthesis; L-valine biosynthesis; L-valine from pyruvate: step 3/4. Functions in the biosynthesis of branched-chain amino acids. Catalyzes the dehydration of (2R,3R)-2,3-dihydroxy-3-methylpentanoate (2,3-dihydroxy-3-methylvalerate) into 2-oxo-3-methylpentanoate (2-oxo-3-methylvalerate) and of (2R)-2,3-dihydroxy-3-methylbutanoate (2,3-dihydroxyisovalerate) into 2-oxo-3-methylbutanoate (2-oxoisovalerate), the penultimate precursor to L-isoleucine and L-valine, respectively. This Burkholderia pseudomallei (strain 1710b) protein is Dihydroxy-acid dehydratase.